A 39-amino-acid chain; its full sequence is MQVNENPNKVPVELNRTSLYLGVLSVLVLGILFSSYFFN.

The chain crosses the membrane as a helical span at residues 18–38 (SLYLGVLSVLVLGILFSSYFF).

The protein belongs to the PsbL family. PSII is composed of 1 copy each of membrane proteins PsbA, PsbB, PsbC, PsbD, PsbE, PsbF, PsbH, PsbI, PsbJ, PsbK, PsbL, PsbM, PsbT, PsbX, PsbY, Psb30/Ycf12, peripheral proteins PsbO, CyanoQ (PsbQ), PsbU, PsbV and a large number of cofactors. It forms dimeric complexes.

The protein resides in the cellular thylakoid membrane. In terms of biological role, one of the components of the core complex of photosystem II (PSII). PSII is a light-driven water:plastoquinone oxidoreductase that uses light energy to abstract electrons from H(2)O, generating O(2) and a proton gradient subsequently used for ATP formation. It consists of a core antenna complex that captures photons, and an electron transfer chain that converts photonic excitation into a charge separation. This subunit is found at the monomer-monomer interface and is required for correct PSII assembly and/or dimerization. This Prochlorococcus marinus (strain MIT 9515) protein is Photosystem II reaction center protein L.